The chain runs to 211 residues: Minor capsid protein VP2 (211 aa).

It belongs to the norovirus VP2 family. In terms of assembly, homooligomer. The portal-like structure consists in 12 copies of VP2. Interacts with capsid protein VP1.

The protein localises to the virion. The protein resides in the host cytoplasm. Functionally, minor structural protein that forms a portal-like structure at a unique three-fold axis of symmetry, following binding to the host receptor. The channel formed by VP2 may allow the delivery of the viral genome through the host endosomal membrane. In Homo sapiens (Human), this protein is Minor capsid protein VP2.